The primary structure comprises 628 residues: Set1/Ash2 histone methyltransferase complex subunit ASH2 (628 aa).

Methionine 1 carries the N-acetylmethionine modification. Positions 1 to 18 (MAAAGAGPGQEAGAGPGP) are enriched in gly residues. The PHD-type; atypical zinc finger occupies 1–66 (MAAAGAGPGQ…SGEAEGGEAN (66 aa)). The disordered stretch occupies residues 1-107 (MAAAGAGPGQ…QAGSVDEENG (107 aa)). The segment covering 36–65 (AAGAAAPPGEGISAAPTVEPSSGEAEGGEA) has biased composition (low complexity). The segment at 67 to 177 (LVDVSGGLET…MCLSALANLT (111 aa)) is DNA-binding. Serine 101 bears the Phosphoserine mark. A C4-type zinc finger spans residues 117–150 (CGICTKWFTADTFGIDTSSCLPFMTNYSFHCNVC). Positions 235-252 (LVKEHPDPGSKDPEEDYP) are enriched in basic and acidic residues. The segment at 235 to 331 (LVKEHPDPGS…AQRLPPHGYP (97 aa)) is disordered. Over residues 270-282 (NQKQSSAVSTSGN) the composition is skewed to polar residues. Gly residues predominate over residues 283–295 (LNGGIAAGSSGKG). Position 296 is an asymmetric dimethylarginine; by PRMT1 and PRMT5 (arginine 296). Serine 316 bears the Phosphoserine mark. Positions 316–628 (SDPLFSAQRL…DGRRSPPWEP (313 aa)) are interaction with RBBP5. In terms of domain architecture, B30.2/SPRY spans 360–583 (LDCWAGKPIP…VSINFGPCFK (224 aa)).

In terms of assembly, interacts with HCFC1. Core component of several methyltransferase-containing complexes including MLL1/MLL, MLL2/3 (also named ASCOM complex) and MLL4/WBP7. Each complex is at least composed of ASH2L, RBBP5, WDR5, DPY30, one or more specific histone methyltransferases (KMT2A/MLL1, KMT2D/MLL2, KMT2C/MLL3 and KMT2B/MLL4), and the facultative components PAGR1, BACC1, CHD8, E2F6, HCFC1, HCFC2, HSP70, INO80C, KDM6A, KANSL1, LAS1L, MAX, MCRS1, MEN1, MGA, KAT8/MOF, NCOA6, PAXIP1/PTIP, PELP1, PHF20, PRP31, RING2, RUVB1/TIP49A, RUVB2/TIP49B, SENP3, TAF1, TAF4, TAF6, TAF7, TAF9, TEX10 and alpha- and beta-tubulin. Component of the SET1 complex, at least composed of the catalytic subunit (SETD1A or SETD1B), WDR5, WDR82, RBBP5, ASH2L/ASH2, CXXC1/CFP1, HCFC1 and DPY30. Found in a complex with RBBP5, ASH2L, DPY30, KMT2A, KMT2D and WDR5. Component of a histone methylation complex composed of at least ZNF335, RBBP5, ASH2L and WDR5; the complex may have histone H3-specific methyltransferase activity, however does not have specificity for 'Lys-4' of histone H3. Within the complex, interacts with ZNF335. Interacts with RBBP5. Components of this complex may associate with components of a nuclear receptor-mediated transcription complex to form a complex at least composed of ZNF335, HCFC1, CCAR2, EMSY, MKI67, RBBP5, ASH2L and WDR5. Within this complex also interacts with CCAR2 and EMSY. Interacts with DPY30. Interacts with SETD1A and SETD1B. Both monomethylated and dimethylated on arginine residues in the C-terminus. Arg-296 is the major site. Methylation is not required for nuclear localization, nor for MLL complex integrity or maintenance of global histone H3K4me3 levels. In terms of tissue distribution, ubiquitously expressed. Predominantly expressed in adult heart and testis and fetal lung and liver, with barely detectable expression in adult lung, liver, kidney, prostate, and peripheral leukocytes.

Its subcellular location is the nucleus. In terms of biological role, transcriptional regulator. Component or associated component of some histone methyltransferase complexes which regulates transcription through recruitment of those complexes to gene promoters. Component of the Set1/Ash2 histone methyltransferase (HMT) complex, a complex that specifically methylates 'Lys-4' of histone H3, but not if the neighboring 'Lys-9' residue is already methylated. As part of the MLL1/MLL complex it is involved in methylation and dimethylation at 'Lys-4' of histone H3. May play a role in hematopoiesis. In association with RBBP5 and WDR5, stimulates the histone methyltransferase activities of KMT2A, KMT2B, KMT2C, KMT2D, SETD1A and SETD1B. The chain is Set1/Ash2 histone methyltransferase complex subunit ASH2 (ASH2L) from Homo sapiens (Human).